We begin with the raw amino-acid sequence, 280 residues long: Ribosomal RNA-processing protein 7 homolog A (280 aa).

A compositionally biased stretch (basic residues) spans 1 to 10 (MVSRRKKRKA). A disordered region spans residues 1-24 (MVSRRKKRKAGGHEESIPSPPGYS). The RRM domain occupies 59 to 159 (RTLFILNVPP…SGIHKWISDY (101 aa)). S99 bears the Phosphoserine mark.

Belongs to the RRP7 family. As to quaternary structure, part of the small subunit (SSU) processome, composed of more than 70 proteins and the RNA chaperone small nucleolar RNA (snoRNA) U3. Interacts with NOL6; required for NOL6 localization to nucleolus.

The protein resides in the nucleus. The protein localises to the nucleolus. Its subcellular location is the cell projection. It localises to the cilium. It is found in the cytoplasm. The protein resides in the cytoskeleton. The protein localises to the microtubule organizing center. Its subcellular location is the centrosome. Nucleolar protein that is involved in ribosomal RNA (rRNA) processing. Also plays a role in primary cilia resorption, and cell cycle progression in neurogenesis and neocortex development. Part of the small subunit (SSU) processome, first precursor of the small eukaryotic ribosomal subunit. During the assembly of the SSU processome in the nucleolus, many ribosome biogenesis factors, an RNA chaperone and ribosomal proteins associate with the nascent pre-rRNA and work in concert to generate RNA folding, modifications, rearrangements and cleavage as well as targeted degradation of pre-ribosomal RNA by the RNA exosome. The chain is Ribosomal RNA-processing protein 7 homolog A (Rrp7a) from Mus musculus (Mouse).